The chain runs to 832 residues: MRGMLPLFEPKGRVLLVDGHHLAYRTFHALKGLTTSRGEPVQAVYGFAKSLLKALKEDGDAVIVVFDAKAPSFRHEAYGGYKAGRAPTPEDFPRQLALIKELVDLLGLARLEVPGYEADDVLASLAKKAEKEGYEVRILTADKDLYQLLSDRIHVLHPEGYLITPAWLWEKYGLRPDQWADYRALTGDESDNLPGVKGIGEKTARKLLEEWGSLEALLKNLDRLKPAIREKILAHMDDLKLSWDLAKVRTDLPLEVDFAKRREPDRERLRAFLERLEFGSLLHEFGLLESPKALEEAPWPPPEGAFVGFVLSRKEPMWADLLALAAARGGRVHRAPEPYKALRDLKEARGLLAKDLSVLALREGLGLPPGDDPMLLAYLLDPSNTTPEGVARRYGGEWTEEAGERAALSERLFANLWGRLEGEERLLWLYREVERPLSAVLAHMEATGVRLDVAYLRALSLEVAEEIARLEAEVFRLAGHPFNLNSRDQLERVLFDELGLPAIGKTEKTGKRSTSAAVLEALREAHPIVEKILQYRELTKLKSTYIDPLPDLIHPRTGRLHTRFNQTATATGRLSSSDPNLQNIPVRTPLGQRIRRAFIAEEGWLLVALDYSQIELRVLAHLSGDENLIRVFQEGRDIHTETASWMFGVPREAVDPLMRRAAKTINFGVLYGMSAHRLSQELAIPYEEAQAFIERYFQSFPKVRAWIEKTLEEGRRRGYVETLFGRRRYVPDLEARVKSVREAAERMAFNMPVQGTAADLMKLAMVKLFPRLEEMGARMLLQVHDELVLEAPKERAEAVARLAKEVMEGVYPLAVPLEVEVGIGEDWLSAKE.

One can recognise a 5'-3' exonuclease domain in the interval 175–260; it reads RPDQWADYRA…DLPLEVDFAK (86 aa). The segment at 410–832 is polymerase; it reads ERLFANLWGR…IGEDWLSAKE (423 aa).

Belongs to the DNA polymerase type-A family.

The catalysed reaction is DNA(n) + a 2'-deoxyribonucleoside 5'-triphosphate = DNA(n+1) + diphosphate. Its function is as follows. In addition to polymerase activity, this DNA polymerase exhibits 5'-3' exonuclease activity. Unlikely to have 3'-5' exonuclease activity due to absence of a 3'-5' exonuclease domain. The polypeptide is DNA polymerase I, thermostable (polA) (Thermus aquaticus).